Consider the following 212-residue polypeptide: Protein HP-25 homolog 1 (212 aa).

Positions 1–34 are cleaved as a signal peptide; it reads MPGGRRRVGSMNIAGFWILAQFVLLLVANVKSSA. Residues 36-66 are disordered; sequence SELCGPRGARGPPGLSGLPGPPGYTGPIGMP. The span at 40–53 shows a compositional bias: low complexity; sequence GPRGARGPPGLSGL. The Collagen-like domain occupies 40-76; that stretch reads GPRGARGPPGLSGLPGPPGYTGPIGMPGLTGRPGLPG. The region spanning 82–212 is the C1q domain; the sequence is PPLPQSAFSV…VFYGFLLNGN (131 aa). Asn-125 carries N-linked (GlcNAc...) asparagine glycosylation.

Its subcellular location is the secreted. The polypeptide is Protein HP-25 homolog 1 (Bos taurus (Bovine)).